The chain runs to 435 residues: tRNA(Ile)-lysidine synthase (435 aa).

24–29 (SGGLDS) lines the ATP pocket.

This sequence belongs to the tRNA(Ile)-lysidine synthase family.

The protein localises to the cytoplasm. It carries out the reaction cytidine(34) in tRNA(Ile2) + L-lysine + ATP = lysidine(34) in tRNA(Ile2) + AMP + diphosphate + H(+). In terms of biological role, ligates lysine onto the cytidine present at position 34 of the AUA codon-specific tRNA(Ile) that contains the anticodon CAU, in an ATP-dependent manner. Cytidine is converted to lysidine, thus changing the amino acid specificity of the tRNA from methionine to isoleucine. The polypeptide is tRNA(Ile)-lysidine synthase (Chromobacterium violaceum (strain ATCC 12472 / DSM 30191 / JCM 1249 / CCUG 213 / NBRC 12614 / NCIMB 9131 / NCTC 9757 / MK)).